The chain runs to 124 residues: MEDQEMQLKVKRVTDKFTESMYVLANEPSIALYRLQEHVRRSLPELVQHKTDMQSWEEQSQGAIYTVEYACSAVKSMTNSSLYFKNIDGLLRQAISLKEQISSSQGRSAVINPNETPAHTSVTP.

The interval serine 102–proline 124 is disordered.

The protein belongs to the BORCS8 family.

The protein localises to the lysosome membrane. Its function is as follows. As part of a BORC-like complex, it may play a role in the movement and localization of lysosomes at the cell periphery. Associated with the cytosolic face of lysosomes, this complex may couple lysosomes to microtubule plus-end-directed kinesin motors, driving lysosome movement toward the cell periphery. This is BLOC-1-related complex subunit 8 from Danio rerio (Zebrafish).